The primary structure comprises 298 residues: uncharacterized protein (298 aa).

It belongs to the glycosyltransferase 2 family.

This is an uncharacterized protein from Mycoplasma genitalium (strain ATCC 33530 / DSM 19775 / NCTC 10195 / G37) (Mycoplasmoides genitalium).